The following is a 415-amino-acid chain: 2-oxoadipate dioxygenase/decarboxylase (415 aa).

2-oxoadipate contacts are provided by H66, R70, and H225. H66 serves as a coordination point for Fe(2+). Residues H225 and E296 each coordinate Fe(2+). Residue A361 coordinates 2-oxoadipate.

It belongs to the 2-oxoadipate dioxygenase/decarboxylase family. Fe(2+) serves as cofactor.

It catalyses the reaction 2-oxoadipate + O2 = (R)-2-hydroxyglutarate + CO2. In terms of biological role, catalyzes the decarboxylation and hydroxylation of 2-oxoadipate (2OA) to form D-2-hydroxyglutarate (D-2-HGA). In Mycobacterium bovis (strain ATCC BAA-935 / AF2122/97), this protein is 2-oxoadipate dioxygenase/decarboxylase.